Reading from the N-terminus, the 24-residue chain is Superoxide dismutase [Cu-Zn], chloroplastic (24 aa).

This sequence belongs to the Cu-Zn superoxide dismutase family. Homodimer. Requires Cu cation as cofactor. Zn(2+) is required as a cofactor.

It localises to the plastid. The protein resides in the chloroplast. The enzyme catalyses 2 superoxide + 2 H(+) = H2O2 + O2. Destroys radicals which are normally produced within the cells and which are toxic to biological systems. In Picea abies (Norway spruce), this protein is Superoxide dismutase [Cu-Zn], chloroplastic.